Reading from the N-terminus, the 391-residue chain is NAD(P)H-quinone oxidoreductase subunit H, chloroplastic (391 aa).

Belongs to the complex I 49 kDa subunit family. As to quaternary structure, NDH is composed of at least 16 different subunits, 5 of which are encoded in the nucleus.

Its subcellular location is the plastid. The protein localises to the chloroplast thylakoid membrane. The catalysed reaction is a plastoquinone + NADH + (n+1) H(+)(in) = a plastoquinol + NAD(+) + n H(+)(out). The enzyme catalyses a plastoquinone + NADPH + (n+1) H(+)(in) = a plastoquinol + NADP(+) + n H(+)(out). Functionally, NDH shuttles electrons from NAD(P)H:plastoquinone, via FMN and iron-sulfur (Fe-S) centers, to quinones in the photosynthetic chain and possibly in a chloroplast respiratory chain. The immediate electron acceptor for the enzyme in this species is believed to be plastoquinone. Couples the redox reaction to proton translocation, and thus conserves the redox energy in a proton gradient. The sequence is that of NAD(P)H-quinone oxidoreductase subunit H, chloroplastic from Physcomitrium patens (Spreading-leaved earth moss).